The chain runs to 544 residues: Chaperonin GroEL (544 aa).

Residues 30-33 (TLGP), Lys-51, 87-91 (DGTTT), Gly-415, 479-481 (NAA), and Asp-495 each bind ATP.

It belongs to the chaperonin (HSP60) family. Forms a cylinder of 14 subunits composed of two heptameric rings stacked back-to-back. Interacts with the co-chaperonin GroES.

The protein resides in the cytoplasm. It carries out the reaction ATP + H2O + a folded polypeptide = ADP + phosphate + an unfolded polypeptide.. Functionally, together with its co-chaperonin GroES, plays an essential role in assisting protein folding. The GroEL-GroES system forms a nano-cage that allows encapsulation of the non-native substrate proteins and provides a physical environment optimized to promote and accelerate protein folding. The chain is Chaperonin GroEL from Acinetobacter baumannii (strain AB307-0294).